A 129-amino-acid polypeptide reads, in one-letter code: MAEFTVAVSDPEDGHTYQIDVDGQDANRFIGRELGDEVDGGAVGLDGYSLELTGGSDTSGRPMRPDVRGVTTKEIMSDGGVGFEPTTDGERKRITVRGREVSDDTRQINAKITARGSDDVADLLGDDDE.

Positions 53–88 are disordered; that stretch reads TGGSDTSGRPMRPDVRGVTTKEIMSDGGVGFEPTTD.

This sequence belongs to the eukaryotic ribosomal protein eS6 family.

This is Small ribosomal subunit protein eS6 (rps6e) from Haloarcula marismortui (strain ATCC 43049 / DSM 3752 / JCM 8966 / VKM B-1809) (Halobacterium marismortui).